A 42-amino-acid polypeptide reads, in one-letter code: Delta-hexatoxin-Ar1a (42 aa).

4 cysteine pairs are disulfide-bonded: C1–C15, C8–C20, C14–C31, and C16–C42.

It belongs to the neurotoxin 06 (delta-actx) family. Expressed by the venom gland.

It is found in the secreted. In terms of biological role, inhibits tetrodotoxin-sensitive voltage-gated sodium channels (Nav) by binding to site 3. It slows the inactivation, causes a prolongation of action potential duration resulting in repetitive firing in autonomic and motor nerve fibers. Does not depolarize the resting potential. Does not affect tetrodotoxin-resistant sodium channels. This lethal neurotoxin is active on both insect and mammalian voltage-gated sodium channels. This chain is Delta-hexatoxin-Ar1a, found in Atrax robustus (Sydney funnel-web spider).